A 78-amino-acid chain; its full sequence is Acyl carrier protein (78 aa).

Residues 2–77 (SDTAERVKKI…DAVKYIEKAT (76 aa)) enclose the Carrier domain. Serine 37 carries the O-(pantetheine 4'-phosphoryl)serine modification.

The protein belongs to the acyl carrier protein (ACP) family. 4'-phosphopantetheine is transferred from CoA to a specific serine of apo-ACP by AcpS. This modification is essential for activity because fatty acids are bound in thioester linkage to the sulfhydryl of the prosthetic group.

Its subcellular location is the cytoplasm. It participates in lipid metabolism; fatty acid biosynthesis. Carrier of the growing fatty acid chain in fatty acid biosynthesis. The polypeptide is Acyl carrier protein (Chelativorans sp. (strain BNC1)).